The sequence spans 547 residues: Glucose-6-phosphate isomerase (547 aa).

Glutamate 354 functions as the Proton donor in the catalytic mechanism. Active-site residues include histidine 385 and lysine 513.

This sequence belongs to the GPI family.

It is found in the cytoplasm. It catalyses the reaction alpha-D-glucose 6-phosphate = beta-D-fructose 6-phosphate. It functions in the pathway carbohydrate biosynthesis; gluconeogenesis. The protein operates within carbohydrate degradation; glycolysis; D-glyceraldehyde 3-phosphate and glycerone phosphate from D-glucose: step 2/4. Functionally, catalyzes the reversible isomerization of glucose-6-phosphate to fructose-6-phosphate. The protein is Glucose-6-phosphate isomerase of Erwinia tasmaniensis (strain DSM 17950 / CFBP 7177 / CIP 109463 / NCPPB 4357 / Et1/99).